We begin with the raw amino-acid sequence, 57 residues long: UPF0391 membrane protein bsl6560 (57 aa).

2 helical membrane passes run 4–24 (WVVT…GGIA) and 30–50 (IAKI…VVGL).

This sequence belongs to the UPF0391 family.

It localises to the cell membrane. This is UPF0391 membrane protein bsl6560 from Bradyrhizobium diazoefficiens (strain JCM 10833 / BCRC 13528 / IAM 13628 / NBRC 14792 / USDA 110).